The following is a 134-amino-acid chain: Large ribosomal subunit protein uL16c (134 aa).

The protein belongs to the universal ribosomal protein uL16 family. As to quaternary structure, part of the 50S ribosomal subunit.

Its subcellular location is the plastid. It localises to the chloroplast. This chain is Large ribosomal subunit protein uL16c, found in Nephroselmis olivacea (Green alga).